A 665-amino-acid polypeptide reads, in one-letter code: tRNA 5-methylaminomethyl-2-thiouridine biosynthesis bifunctional protein MnmC (665 aa).

The segment at 1-243 (MSQTSLHHAR…KWAMLAGERV (243 aa)) is tRNA (mnm(5)s(2)U34)-methyltransferase. The FAD-dependent cmnm(5)s(2)U34 oxidoreductase stretch occupies residues 268-665 (IGGGIASAMT…RKLLKGKPLN (398 aa)).

The protein in the N-terminal section; belongs to the methyltransferase superfamily. tRNA (mnm(5)s(2)U34)-methyltransferase family. This sequence in the C-terminal section; belongs to the DAO family. It depends on FAD as a cofactor.

The protein localises to the cytoplasm. The catalysed reaction is 5-aminomethyl-2-thiouridine(34) in tRNA + S-adenosyl-L-methionine = 5-methylaminomethyl-2-thiouridine(34) in tRNA + S-adenosyl-L-homocysteine + H(+). Its function is as follows. Catalyzes the last two steps in the biosynthesis of 5-methylaminomethyl-2-thiouridine (mnm(5)s(2)U) at the wobble position (U34) in tRNA. Catalyzes the FAD-dependent demodification of cmnm(5)s(2)U34 to nm(5)s(2)U34, followed by the transfer of a methyl group from S-adenosyl-L-methionine to nm(5)s(2)U34, to form mnm(5)s(2)U34. This is tRNA 5-methylaminomethyl-2-thiouridine biosynthesis bifunctional protein MnmC from Aeromonas salmonicida (strain A449).